Here is a 254-residue protein sequence, read N- to C-terminus: uncharacterized protein (254 aa).

A disordered region spans residues 60–161 (PKSPTTTSIS…PEIPQAAPGT (102 aa)). Composition is skewed to low complexity over residues 63-77 (PTTTSISTSTVSTTP) and 89-146 (TPIP…TTTS).

This is an uncharacterized protein from Caenorhabditis elegans.